The sequence spans 185 residues: Elongation factor P (185 aa).

The protein belongs to the elongation factor P family.

It is found in the cytoplasm. The protein operates within protein biosynthesis; polypeptide chain elongation. In terms of biological role, involved in peptide bond synthesis. Stimulates efficient translation and peptide-bond synthesis on native or reconstituted 70S ribosomes in vitro. Probably functions indirectly by altering the affinity of the ribosome for aminoacyl-tRNA, thus increasing their reactivity as acceptors for peptidyl transferase. This is Elongation factor P from Thermosipho africanus (strain TCF52B).